A 681-amino-acid chain; its full sequence is GAS2-like protein 1 (681 aa).

Ala2 is modified (N-acetylalanine). The Calponin-homology (CH) domain occupies 27–148; the sequence is EAMKEDLAEW…CLLEVARRGA (122 aa). Disordered regions lie at residues 168–204, 278–509, and 536–681; these read LRAA…TPSD, STAH…PLQL, and ASVT…DSWM. A compositionally biased stretch (low complexity) spans 186 to 199; the sequence is ETAPAPGTPARGPR. Position 193 is a phosphothreonine (Thr193). Positions 203-275 constitute a GAR domain; the sequence is SDLRNLDELV…HYLDKHDPCR (73 aa). The segment covering 291-303 has biased composition (polar residues); the sequence is FSPQRVSPTTSPR. Residues Ser306 and Ser316 each carry the phosphoserine modification. Positions 327–342 are enriched in basic and acidic residues; that stretch reads STKEGPETPPRPRDQL. The residue at position 334 (Thr334) is a Phosphothreonine. Residues Ser352 and Ser355 each carry the phosphoserine modification. Residues 354-365 show a composition bias toward low complexity; that stretch reads DSDSSASSAQSG. A compositionally biased stretch (basic and acidic residues) spans 370 to 381; that stretch reads RSDDTGTGPRRE. Thr391 is modified (phosphothreonine). Residue Ser394 is modified to Phosphoserine. Over residues 404–413 the composition is skewed to basic and acidic residues; it reads QSRDRLDRGR. Phosphoserine occurs at positions 436, 438, 479, and 486. Residues 437–454 show a composition bias toward basic and acidic residues; that stretch reads QSREEQAVLLVRRDRDGQ. Residues 475 to 493 show a composition bias toward low complexity; that stretch reads PRARSPAAPRLSRVSSPSP. An Omega-N-methylarginine modification is found at Arg487. Residues Ser490 and Ser492 each carry the phosphoserine modification. At Thr498 the chain carries Phosphothreonine. Arg504 bears the Omega-N-methylarginine mark. The segment covering 542–556 has biased composition (pro residues); that stretch reads GPVPDPARAPDPPAP. Residues 557–571 are compositionally biased toward low complexity; it reads DSAYCSSSSSSSSLS. Arg633 carries the post-translational modification Omega-N-methylarginine. Basic and acidic residues predominate over residues 634 to 644; it reads GRMDTQPDRKP. Ser657 is modified (phosphoserine).

It belongs to the GAS2 family. As to quaternary structure, interacts with MAPRE1.

The protein resides in the cytoplasm. Its subcellular location is the cytoskeleton. It localises to the stress fiber. Its function is as follows. Involved in the cross-linking of microtubules and microfilaments. Regulates microtubule dynamics and stability by interacting with microtubule plus-end tracking proteins, such as MAPRE1, to regulate microtubule growth along actin stress fibers. This Homo sapiens (Human) protein is GAS2-like protein 1 (GAS2L1).